The primary structure comprises 393 residues: CAI-1 autoinducer synthase (393 aa).

K240 carries the N6-(pyridoxal phosphate)lysine modification.

It belongs to the class-II pyridoxal-phosphate-dependent aminotransferase family. Pyridoxal 5'-phosphate is required as a cofactor.

Functionally, required for the synthesis of the quorum-sensing autoinducer CAI-1 ((S)-3-hydroxytridecan-4-one) which probably functions as an intragenus signal. This is CAI-1 autoinducer synthase (cqsA) from Vibrio campbellii (strain ATCC BAA-1116).